The primary structure comprises 258 residues: Snake venom serine protease PTLE1 (258 aa).

An N-terminal signal peptide occupies residues 1-18; the sequence is MVLIRVLANLLILQLSYA. Residues 19–24 constitute a propeptide that is removed on maturation; it reads QKSSEL. The region spanning 25 to 249 is the Peptidase S1 domain; sequence VIGGDECNIN…YTDWIENIIA (225 aa). Disulfide bonds link cysteine 31–cysteine 163, cysteine 50–cysteine 66, cysteine 98–cysteine 256, cysteine 142–cysteine 210, cysteine 174–cysteine 189, and cysteine 200–cysteine 225. A glycan (N-linked (GlcNAc...) asparagine) is linked at asparagine 44. The active-site Charge relay system is the histidine 65. 2 N-linked (GlcNAc...) asparagine glycosylation sites follow: asparagine 79 and asparagine 103. Catalysis depends on aspartate 110, which acts as the Charge relay system. N-linked (GlcNAc...) asparagine glycosylation occurs at asparagine 121. Catalysis depends on serine 204, which acts as the Charge relay system.

Belongs to the peptidase S1 family. Snake venom subfamily. Monomer. Expressed by the venom gland.

It localises to the secreted. In terms of biological role, snake venom serine protease that may act in the hemostasis system of the prey. In Gloydius halys (Chinese water mocassin), this protein is Snake venom serine protease PTLE1.